Reading from the N-terminus, the 311-residue chain is Formimidoylglutamase (311 aa).

Mn(2+)-binding residues include H130, D155, H157, D159, C242, and D244.

This sequence belongs to the arginase family. It depends on Mn(2+) as a cofactor.

The enzyme catalyses N-formimidoyl-L-glutamate + H2O = formamide + L-glutamate. Its pathway is amino-acid degradation; L-histidine degradation into L-glutamate; L-glutamate from N-formimidoyl-L-glutamate (hydrolase route): step 1/1. Functionally, catalyzes the conversion of N-formimidoyl-L-glutamate to L-glutamate and formamide. The protein is Formimidoylglutamase of Staphylococcus aureus (strain MRSA252).